A 75-amino-acid polypeptide reads, in one-letter code: Small ribosomal subunit protein bS16c (75 aa).

This sequence belongs to the bacterial ribosomal protein bS16 family.

The protein localises to the plastid. It localises to the chloroplast. The sequence is that of Small ribosomal subunit protein bS16c from Cyanidium caldarium (Red alga).